The primary structure comprises 378 residues: MPQPCLLMECESSPREEEIPPLFWGLDPVFLAFAKLYIKDILEMKESQQVPGTYFYNGHPIRRVDIMGAVISVKERETFYSYGVDDATGVINCVCWKKLSNAESSSDPAILSTARELSMTSQLKKLQETIEQKTRIGIGDIIRVRGSVRMFREEREICANIYYKVDDPVWNMQIARMLELPKLYQKVYDQPFRNPALQEEEALNNKDNLDLAGLTSLLSEKIKEFLQEKKMQSFYQQELETVESLQSLASRPVTHSTGSDQVELKDSGTSGVAQRVFKNALQLLQEKGLVFQRDSGSDKLYYVTTKDKDLQQKIYHIIKEDCQKPNHMEKGCHLLHILNCVHLNLRWDLSKAVLQRVLELLEDQSDIVSTADHYYAAF.

The interval 8–195 (MECESSPREE…KVYDQPFRNP (188 aa)) is interaction with CTC1. The OB DNA-binding region spans 64 to 165 (VDIMGAVISV…EICANIYYKV (102 aa)). Winged helix-turn-helix (wHTH) regions lie at residues 201–305 (EALN…YVTT) and 306–378 (KDKD…YAAF).

The protein belongs to the STN1 family. In terms of assembly, component of the CST complex, composed of TEN1/C17orf106, CTC1/C17orf68 and STN1; in the complex interacts directly with TEN1 and CTC1. Interacts with ACD/TPP1. Interacts with POT1 and POLA1.

It localises to the nucleus. It is found in the chromosome. The protein resides in the telomere. In terms of biological role, component of the CST complex proposed to act as a specialized replication factor promoting DNA replication under conditions of replication stress or natural replication barriers such as the telomere duplex. The CST complex binds single-stranded DNA with high affinity in a sequence-independent manner, while isolated subunits bind DNA with low affinity by themselves. Initially the CST complex has been proposed to protect telomeres from DNA degradation. However, the CST complex has been shown to be involved in several aspects of telomere replication. The CST complex inhibits telomerase and is involved in telomere length homeostasis; it is proposed to bind to newly telomerase-synthesized 3' overhangs and to terminate telomerase action implicating the association with the ACD:POT1 complex thus interfering with its telomerase stimulation activity. The CST complex is also proposed to be involved in fill-in synthesis of the telomeric C-strand probably implicating recruitment and activation of DNA polymerase alpha. The CST complex facilitates recovery from many forms of exogenous DNA damage; seems to be involved in the re-initiation of DNA replication at repaired forks and/or dormant origins. Required for efficicient replication of the duplex region of the telomere. Promotes efficient replication of lagging-strand telomeres. Promotes general replication start following replication-fork stalling implicating new origin firing. May be in involved in C-strand fill-in during late S/G2 phase independent of its role in telomere duplex replication. The protein is CST complex subunit STN1 of Mus musculus (Mouse).